The primary structure comprises 244 residues: Flavin-dependent thymidylate synthase (244 aa).

Residues 7–199 (PRVFLIASWG…PNLARLVWED (193 aa)) form the ThyX domain. FAD contacts are provided by residues Ser60 and 83-85 (RHR). DUMP is bound by residues 80 to 83 (QFIR), 93 to 95 (SQR), and Arg137. The short motif at 83-93 (RHRMASYWSES) is the ThyX motif element. FAD contacts are provided by residues 153–155 (NAR) and Asn160. A dUMP-binding site is contributed by Arg165. The active-site Involved in ionization of N3 of dUMP, leading to its activation is Arg165.

This sequence belongs to the thymidylate synthase ThyX family. As to quaternary structure, homotetramer. FAD serves as cofactor.

It carries out the reaction dUMP + (6R)-5,10-methylene-5,6,7,8-tetrahydrofolate + NADPH + H(+) = dTMP + (6S)-5,6,7,8-tetrahydrofolate + NADP(+). The protein operates within pyrimidine metabolism; dTTP biosynthesis. Catalyzes the reductive methylation of 2'-deoxyuridine-5'-monophosphate (dUMP) to 2'-deoxythymidine-5'-monophosphate (dTMP) while utilizing 5,10-methylenetetrahydrofolate (mTHF) as the methyl donor, and NADPH and FADH(2) as the reductant. The protein is Flavin-dependent thymidylate synthase of Pyrobaculum aerophilum (strain ATCC 51768 / DSM 7523 / JCM 9630 / CIP 104966 / NBRC 100827 / IM2).